Consider the following 170-residue polypeptide: Large ribosomal subunit protein uL15 (170 aa).

Over residues 1–12 (MKLHDLRPAEGA) the composition is skewed to basic and acidic residues. Positions 1–52 (MKLHDLRPAEGAHRKRKRIGRGHGSGKGKTGGKGMMGQKARSGPGPYRTFEG) are disordered. Positions 13-26 (HRKRKRIGRGHGSG) are enriched in basic residues.

The protein belongs to the universal ribosomal protein uL15 family. Part of the 50S ribosomal subunit.

Its function is as follows. Binds to the 23S rRNA. This Chloroflexus aurantiacus (strain ATCC 29366 / DSM 635 / J-10-fl) protein is Large ribosomal subunit protein uL15.